Here is a 232-residue protein sequence, read N- to C-terminus: Small ribosomal subunit protein uS3 (232 aa).

Residues 39–107 form the KH type-2 domain; that stretch reads IRKFLKTKLY…DIAINIKEER (69 aa). Positions 213–222 are enriched in basic and acidic residues; it reads QADKNEDTSP. The disordered stretch occupies residues 213-232; the sequence is QADKNEDTSPKKPRRARRGK. A compositionally biased stretch (basic residues) spans 223 to 232; it reads KKPRRARRGK.

The protein belongs to the universal ribosomal protein uS3 family. As to quaternary structure, part of the 30S ribosomal subunit. Forms a tight complex with proteins S10 and S14.

Functionally, binds the lower part of the 30S subunit head. Binds mRNA in the 70S ribosome, positioning it for translation. The polypeptide is Small ribosomal subunit protein uS3 (Campylobacter fetus subsp. fetus (strain 82-40)).